The chain runs to 330 residues: RNA polymerase sigma factor RpoS (330 aa).

Residues 56–89 (DATQLYLGEIGYSPLLTAEEEVYFARRALRGDVA) are sigma-70 factor domain-1. A sigma-70 factor domain-2 region spans residues 94–164 (MIESNLRLVV…ERAIMNQTRT (71 aa)). The short motif at 118–121 (DLIE) is the Interaction with polymerase core subunit RpoC element. The interval 174 to 249 (ELNVYLRTAR…DEKENGPEDT (76 aa)) is sigma-70 factor domain-3. The sigma-70 factor domain-4 stretch occupies residues 262–315 (WLFELNAKQREVLARRFGLLGYEAATLEDVGREIGLTRERVRQIQVEGLRRLRE). The H-T-H motif DNA-binding region spans 288–307 (LEDVGREIGLTRERVRQIQV).

This sequence belongs to the sigma-70 factor family. RpoS subfamily. As to quaternary structure, interacts with the RNA polymerase core enzyme.

The protein resides in the cytoplasm. In terms of biological role, sigma factors are initiation factors that promote the attachment of RNA polymerase to specific initiation sites and are then released. This sigma factor is the master transcriptional regulator of the stationary phase and the general stress response. The sequence is that of RNA polymerase sigma factor RpoS from Salmonella dublin.